The chain runs to 88 residues: UPF0250 protein bbp_432 (88 aa).

It belongs to the UPF0250 family.

This Buchnera aphidicola subsp. Baizongia pistaciae (strain Bp) protein is UPF0250 protein bbp_432.